The sequence spans 281 residues: Apolipoprotein E (281 aa).

The signal sequence occupies residues 1–18; that stretch reads MKVLWAALLIALLAGCQG. A run of 5 repeats spans residues 82–103, 104–125, 126–147, 148–169, and 198–219. The interval 82–219 is 5 X 22 AA approximate tandem repeats; that stretch reads ALMDETMKEL…RLDEVKEQVE (138 aa). M145 bears the Methionine sulfoxide mark. A Phosphoserine modification is found at S149. Residues 160-170 are LDL and other lipoprotein receptors binding; it reads HLRKLRTVSYT. Heparin is bound by residues 164-167 and 193-200; these read LRTV and GERLRTRM. The interval 230–281 is homooligomerization; that stretch reads QQMRLQAEAFQARLKSWFEPLVEDMQRQWAGLVEKVQAAVGASAAPVPSDNH. The tract at residues 242–254 is specificity for association with VLDL; that stretch reads RLKSWFEPLVEDM.

It belongs to the apolipoprotein A1/A4/E family. As to quaternary structure, homotetramer. May interact with ABCA1; functionally associated with ABCA1 in the biogenesis of HDLs. May interact with APP/A4 amyloid-beta peptide; the interaction is extremely stable in vitro but its physiological significance is unclear. May interact with MAPT. May interact with MAP2. In the cerebrospinal fluid, interacts with secreted SORL1. Interacts with PMEL; this allows the loading of PMEL luminal fragment on ILVs to induce fibril nucleation. Post-translationally, APOE exists as multiple glycosylated and sialylated glycoforms within cells and in plasma. The extent of glycosylation and sialylation are tissue and context specific. Glycated in plasma VLDL. In terms of processing, phosphorylated by FAM20C in the extracellular medium.

It localises to the secreted. The protein resides in the extracellular space. It is found in the extracellular matrix. The protein localises to the extracellular vesicle. Its subcellular location is the endosome. It localises to the multivesicular body. Functionally, APOE is an apolipoprotein, a protein associating with lipid particles, that mainly functions in lipoprotein-mediated lipid transport between organs via the plasma and interstitial fluids. APOE is a core component of plasma lipoproteins and is involved in their production, conversion and clearance. Apolipoproteins are amphipathic molecules that interact both with lipids of the lipoprotein particle core and the aqueous environment of the plasma. As such, APOE associates with chylomicrons, chylomicron remnants, very low density lipoproteins (VLDL) and intermediate density lipoproteins (IDL) but shows a preferential binding to high-density lipoproteins (HDL). It also binds a wide range of cellular receptors including the LDL receptor/LDLR, the LDL receptor-related proteins LRP1, LRP2 and LRP8 and the very low-density lipoprotein receptor/VLDLR that mediate the cellular uptake of the APOE-containing lipoprotein particles. Finally, APOE also has a heparin-binding activity and binds heparan-sulfate proteoglycans on the surface of cells, a property that supports the capture and the receptor-mediated uptake of APOE-containing lipoproteins by cells. A main function of APOE is to mediate lipoprotein clearance through the uptake of chylomicrons, VLDLs, and HDLs by hepatocytes. APOE is also involved in the biosynthesis by the liver of VLDLs as well as their uptake by peripheral tissues ensuring the delivery of triglycerides and energy storage in muscle, heart and adipose tissues. By participating in the lipoprotein-mediated distribution of lipids among tissues, APOE plays a critical role in plasma and tissues lipid homeostasis. APOE is also involved in two steps of reverse cholesterol transport, the HDLs-mediated transport of cholesterol from peripheral tissues to the liver, and thereby plays an important role in cholesterol homeostasis. First, it is functionally associated with ABCA1 in the biogenesis of HDLs in tissues. Second, it is enriched in circulating HDLs and mediates their uptake by hepatocytes. APOE also plays an important role in lipid transport in the central nervous system, regulating neuron survival and sprouting. This chain is Apolipoprotein E (APOE), found in Aotus nancymaae (Ma's night monkey).